We begin with the raw amino-acid sequence, 466 residues long: Endoglucanase E-5 (466 aa).

The signal sequence occupies residues Met-1–Ala-36. One can recognise a CBM2 domain in the interval Ala-37–Gly-139. Positions Cys-129–Glu-166 are disordered. The Proton donor role is filled by Glu-299. Glu-391 functions as the Nucleophile in the catalytic mechanism.

The protein belongs to the glycosyl hydrolase 5 (cellulase A) family.

It carries out the reaction Endohydrolysis of (1-&gt;4)-beta-D-glucosidic linkages in cellulose, lichenin and cereal beta-D-glucans.. It functions in the pathway glycan metabolism; cellulose degradation. The chain is Endoglucanase E-5 (celE) from Thermobifida fusca (Thermomonospora fusca).